The sequence spans 423 residues: AP-1 complex subunit mu-2 (423 aa).

The MHD domain occupies 168-421 (KNEVFIDVIE…ITQSGDYQLR (254 aa)).

It belongs to the adaptor complexes medium subunit family. As to quaternary structure, adaptor protein complex 1 (AP-1) is a heterotetramer composed of two large adaptins (gamma-type subunit AP1G1 and beta-type subunit AP1B1), a medium adaptin (mu-type subunit AP1M1 or AP1M2) and a small adaptin (sigma-type subunit AP1S1 or AP1S2 or AP1S3). Interacts with P2X4. Phosphorylation of membrane-bound AP1M1/AP1M2 increases its affinity for sorting signals.

Its subcellular location is the golgi apparatus. It localises to the cytoplasmic vesicle. It is found in the clathrin-coated vesicle membrane. Its function is as follows. Subunit of clathrin-associated adaptor protein complex 1 that plays a role in protein sorting in the trans-Golgi network (TGN) and endosomes. The AP complexes mediate the recruitment of clathrin to membranes and the recognition of sorting signals within the cytosolic tails of transmembrane cargo molecules. The sequence is that of AP-1 complex subunit mu-2 (Ap1m2) from Rattus norvegicus (Rat).